The primary structure comprises 155 residues: Small ribosomal subunit protein uS7cz/uS7cy (155 aa).

It belongs to the universal ribosomal protein uS7 family. Part of the 30S ribosomal subunit.

Its subcellular location is the plastid. One of the primary rRNA binding proteins, it binds directly to 16S rRNA where it nucleates assembly of the head domain of the 30S subunit. This Cuscuta obtusiflora (Peruvian dodder) protein is Small ribosomal subunit protein uS7cz/uS7cy (rps7-A).